The chain runs to 419 residues: Methionine aminopeptidase 2 (419 aa).

Positions 1-69 (MSTNSSNPNE…KITAIDNSYP (69 aa)) are disordered. A compositionally biased stretch (basic and acidic residues) spans 11–29 (VMEKVQDLKIDDSKPKVDS). Residues 30 to 41 (EEQPEAESDGES) show a composition bias toward acidic residues. Positions 48–61 (KKKKKKKSKKKKKI) are enriched in basic residues. Residue His-172 coordinates substrate. A divalent metal cation-binding residues include Asp-192, Asp-203, and His-272. His-280 contacts substrate. 2 residues coordinate a divalent metal cation: Glu-305 and Glu-400.

This sequence belongs to the peptidase M24A family. Methionine aminopeptidase eukaryotic type 2 subfamily. It depends on Co(2+) as a cofactor. Requires Zn(2+) as cofactor. The cofactor is Mn(2+). Fe(2+) is required as a cofactor.

It localises to the cytoplasm. It carries out the reaction Release of N-terminal amino acids, preferentially methionine, from peptides and arylamides.. In terms of biological role, cotranslationally removes the N-terminal methionine from nascent proteins. The N-terminal methionine is often cleaved when the second residue in the primary sequence is small and uncharged (Met-Ala-, Cys, Gly, Pro, Ser, Thr, or Val). The polypeptide is Methionine aminopeptidase 2 (Debaryomyces hansenii (strain ATCC 36239 / CBS 767 / BCRC 21394 / JCM 1990 / NBRC 0083 / IGC 2968) (Yeast)).